The following is a 388-amino-acid chain: MDLFEYQAKKLFAEHGVPVPTGKIATTPQQAREIATELGGKVVVKAQVKAGGRGKAGGVKVADGPDDAFEKASAILGMDIKGHTVHSVLVEQASNIAEEYYASFLLDRANRTFLAMASREGGMEIEEVAATNPEALARIHIDPLTGVDAAKAREIAVAAKLPEAAIEGASVLLVKLWEVFVKADATLVEVNPLILTGDGKVIALDGKVTLDENADFRHPENAELVDVAAVDPLEQKAKEKGLNYVKLEGQVGIIGNGAGLVMSTLDVVTYAGEEFGGQRPANFLDIGGGASAEVMANGLSIILSDPSVKSVFVNIFGGITACDAVANGIVQALAIVGDVSTPLVVRLDGNNAEEGRRILKEANLPVVKPVDTMDGAAKLAAELAAAAA.

The 228-residue stretch at 9 to 236 (KKLFAEHGVP…VAAVDPLEQK (228 aa)) folds into the ATP-grasp domain. ATP is bound by residues Lys45, 52–54 (GRG), Glu91, Ser94, and Glu99. Residues Asn191 and Asp205 each coordinate Mg(2+). Substrate is bound by residues Asn256 and 318–320 (GIT).

This sequence belongs to the succinate/malate CoA ligase beta subunit family. In terms of assembly, heterotetramer of two alpha and two beta subunits. The cofactor is Mg(2+).

The catalysed reaction is succinate + ATP + CoA = succinyl-CoA + ADP + phosphate. It catalyses the reaction GTP + succinate + CoA = succinyl-CoA + GDP + phosphate. It functions in the pathway carbohydrate metabolism; tricarboxylic acid cycle; succinate from succinyl-CoA (ligase route): step 1/1. Its function is as follows. Succinyl-CoA synthetase functions in the citric acid cycle (TCA), coupling the hydrolysis of succinyl-CoA to the synthesis of either ATP or GTP and thus represents the only step of substrate-level phosphorylation in the TCA. The beta subunit provides nucleotide specificity of the enzyme and binds the substrate succinate, while the binding sites for coenzyme A and phosphate are found in the alpha subunit. This chain is Succinate--CoA ligase [ADP-forming] subunit beta, found in Parafrankia sp. (strain EAN1pec).